The primary structure comprises 61 residues: Small ribosomal subunit protein uS14B (61 aa).

Zn(2+)-binding residues include C24, C27, C40, and C43.

This sequence belongs to the universal ribosomal protein uS14 family. Zinc-binding uS14 subfamily. In terms of assembly, part of the 30S ribosomal subunit. Contacts proteins S3 and S10. Zn(2+) serves as cofactor.

Its function is as follows. Binds 16S rRNA, required for the assembly of 30S particles and may also be responsible for determining the conformation of the 16S rRNA at the A site. This Rhodococcus jostii (strain RHA1) protein is Small ribosomal subunit protein uS14B.